Consider the following 582-residue polypeptide: Glutamine--tRNA ligase (582 aa).

A 'HIGH' region motif is present at residues 50 to 60 (PEPNGYLHIGH). ATP is bound by residues 51 to 53 (EPN) and 57 to 63 (HIGHAKS). Residues Asp83 and Tyr235 each contribute to the L-glutamine site. ATP contacts are provided by residues Thr254 and 289–290 (RL). Positions 296 to 300 (ITSKR) match the 'KMSKS' region motif.

The protein belongs to the class-I aminoacyl-tRNA synthetase family. In terms of assembly, monomer.

Its subcellular location is the cytoplasm. The catalysed reaction is tRNA(Gln) + L-glutamine + ATP = L-glutaminyl-tRNA(Gln) + AMP + diphosphate. The sequence is that of Glutamine--tRNA ligase from Cupriavidus metallidurans (strain ATCC 43123 / DSM 2839 / NBRC 102507 / CH34) (Ralstonia metallidurans).